The following is a 607-amino-acid chain: UvrABC system protein C (607 aa).

The 79-residue stretch at 16-94 (GRPGVYRMFD…IKEWRPPYNI (79 aa)) folds into the GIY-YIG domain. Residues 203–238 (NALTDELSAGMEQAASTLDFEKAAELRDQISLLRRV) enclose the UVR domain.

Belongs to the UvrC family. Interacts with UvrB in an incision complex.

It localises to the cytoplasm. The UvrABC repair system catalyzes the recognition and processing of DNA lesions. UvrC both incises the 5' and 3' sides of the lesion. The N-terminal half is responsible for the 3' incision and the C-terminal half is responsible for the 5' incision. This chain is UvrABC system protein C, found in Pseudomonas protegens (strain DSM 19095 / LMG 27888 / CFBP 6595 / CHA0).